Here is a 122-residue protein sequence, read N- to C-terminus: Probable DNA-directed RNA polymerase II subunit RPB11 (122 aa).

Belongs to the archaeal Rpo11/eukaryotic RPB11/RPC19 RNA polymerase subunit family. In terms of assembly, component of the RNA polymerase II (Pol II) complex consisting of 12 subunits.

It localises to the nucleus. Functionally, DNA-dependent RNA polymerase catalyzes the transcription of DNA into RNA using the four ribonucleoside triphosphates as substrates. Component of RNA polymerase II which synthesizes mRNA precursors and many functional non-coding RNAs. Pol II is the central component of the basal RNA polymerase II transcription machinery. It is composed of mobile elements that move relative to each other. RPB11 is part of the core element with the central large cleft. This chain is Probable DNA-directed RNA polymerase II subunit RPB11 (rpb-11), found in Caenorhabditis elegans.